Here is a 449-residue protein sequence, read N- to C-terminus: Naphthalene 1,2-dioxygenase system, large oxygenase component (449 aa).

In terms of domain architecture, Rieske spans 39–137 (WLFLTHDSLI…LDKKCMGLKE (99 aa)). Residues C81, H83, C101, and H104 each contribute to the [2Fe-2S] cluster site. Residues H208, H213, and D362 each coordinate Fe cation.

The protein belongs to the bacterial ring-hydroxylating dioxygenase alpha subunit family. As to quaternary structure, the naphthalene dioxygenase (NDO) multicomponent enzyme system is composed of an electron transfer component and a dioxygenase component (iron sulfur protein (ISP)). The electron transfer component is composed of a ferredoxin reductase (NdoR) and a ferredoxin (NdoA), and the dioxygenase component is formed of a heterohexamer (trimer of heterodimers) of three large alpha subunits (NdoB) and three small beta subunits (NdoC). The cofactor is [2Fe-2S] cluster. Fe(2+) serves as cofactor.

It carries out the reaction naphthalene + NADH + O2 + H(+) = (1R,2S)-1,2-dihydronaphthalene-1,2-diol + NAD(+). It participates in aromatic compound metabolism; naphthalene degradation. Functionally, component of the naphthalene dioxygenase (NDO) multicomponent enzyme system which catalyzes the incorporation of both atoms of molecular oxygen into naphthalene to form cis-(1R,2S)-dihydroxy-1,2-dihydronaphthalene. The alpha subunit has a catalytic role in the holoenzyme. The sequence is that of Naphthalene 1,2-dioxygenase system, large oxygenase component from Pseudomonas aeruginosa.